Reading from the N-terminus, the 168-residue chain is Bifunctional protein PyrR (168 aa).

The short motif at 90–102 (LVLIDDVLMSGRT) is the PRPP-binding element.

It belongs to the purine/pyrimidine phosphoribosyltransferase family. PyrR subfamily.

The enzyme catalyses UMP + diphosphate = 5-phospho-alpha-D-ribose 1-diphosphate + uracil. Its function is as follows. Regulates the transcription of the pyrimidine nucleotide (pyr) operon in response to exogenous pyrimidines. In terms of biological role, also displays a weak uracil phosphoribosyltransferase activity which is not physiologically significant. The chain is Bifunctional protein PyrR from Pseudomonas fluorescens (strain ATCC BAA-477 / NRRL B-23932 / Pf-5).